The sequence spans 180 residues: Translation initiation factor IF-3 (180 aa).

It belongs to the IF-3 family. As to quaternary structure, monomer.

Its subcellular location is the cytoplasm. Functionally, IF-3 binds to the 30S ribosomal subunit and shifts the equilibrium between 70S ribosomes and their 50S and 30S subunits in favor of the free subunits, thus enhancing the availability of 30S subunits on which protein synthesis initiation begins. In Shewanella oneidensis (strain ATCC 700550 / JCM 31522 / CIP 106686 / LMG 19005 / NCIMB 14063 / MR-1), this protein is Translation initiation factor IF-3.